A 500-amino-acid chain; its full sequence is Probable cytosol aminopeptidase (500 aa).

2 residues coordinate Mn(2+): Lys262 and Asp267. Lys274 is an active-site residue. Mn(2+) contacts are provided by Asp285, Asp344, and Glu346. Residue Arg348 is part of the active site.

This sequence belongs to the peptidase M17 family. It depends on Mn(2+) as a cofactor.

The protein localises to the cytoplasm. The catalysed reaction is Release of an N-terminal amino acid, Xaa-|-Yaa-, in which Xaa is preferably Leu, but may be other amino acids including Pro although not Arg or Lys, and Yaa may be Pro. Amino acid amides and methyl esters are also readily hydrolyzed, but rates on arylamides are exceedingly low.. The enzyme catalyses Release of an N-terminal amino acid, preferentially leucine, but not glutamic or aspartic acids.. In terms of biological role, presumably involved in the processing and regular turnover of intracellular proteins. Catalyzes the removal of unsubstituted N-terminal amino acids from various peptides. This Ehrlichia ruminantium (strain Gardel) protein is Probable cytosol aminopeptidase.